The following is a 185-amino-acid chain: Probable nicotinate-nucleotide adenylyltransferase (185 aa).

This sequence belongs to the NadD family.

It carries out the reaction nicotinate beta-D-ribonucleotide + ATP + H(+) = deamido-NAD(+) + diphosphate. Its pathway is cofactor biosynthesis; NAD(+) biosynthesis; deamido-NAD(+) from nicotinate D-ribonucleotide: step 1/1. Its function is as follows. Catalyzes the reversible adenylation of nicotinate mononucleotide (NaMN) to nicotinic acid adenine dinucleotide (NaAD). In Methylorubrum extorquens (strain CM4 / NCIMB 13688) (Methylobacterium extorquens), this protein is Probable nicotinate-nucleotide adenylyltransferase.